We begin with the raw amino-acid sequence, 360 residues long: Neutral protease 2 homolog SS1G_13741 (360 aa).

Residue N129 is glycosylated (N-linked (GlcNAc...) asparagine). Disulfide bonds link C189–C261 and C268–C286. Zn(2+) is bound at residue H311. E312 is a catalytic residue. Zn(2+) is bound by residues H315 and D326.

It belongs to the peptidase M35 family. Requires Zn(2+) as cofactor.

It localises to the secreted. The enzyme catalyses Preferential cleavage of bonds with hydrophobic residues in P1'. Also 3-Asn-|-Gln-4 and 8-Gly-|-Ser-9 bonds in insulin B chain.. Its function is as follows. Secreted metalloproteinase that allows assimilation of proteinaceous substrates. Shows high activities on basic nuclear substrates such as histone and protamine. In Sclerotinia sclerotiorum (strain ATCC 18683 / 1980 / Ss-1) (White mold), this protein is Neutral protease 2 homolog SS1G_13741.